A 459-amino-acid chain; its full sequence is Phosphoglucosamine mutase (459 aa).

S105 serves as the catalytic Phosphoserine intermediate. S105, D252, D254, and D256 together coordinate Mg(2+). A Phosphoserine modification is found at S105.

The protein belongs to the phosphohexose mutase family. The cofactor is Mg(2+). Activated by phosphorylation.

It carries out the reaction alpha-D-glucosamine 1-phosphate = D-glucosamine 6-phosphate. In terms of biological role, catalyzes the conversion of glucosamine-6-phosphate to glucosamine-1-phosphate. The polypeptide is Phosphoglucosamine mutase (Bifidobacterium adolescentis (strain ATCC 15703 / DSM 20083 / NCTC 11814 / E194a)).